Here is a 90-residue protein sequence, read N- to C-terminus: Small ribosomal subunit protein bS16 (90 aa).

Belongs to the bacterial ribosomal protein bS16 family.

This Oceanobacillus iheyensis (strain DSM 14371 / CIP 107618 / JCM 11309 / KCTC 3954 / HTE831) protein is Small ribosomal subunit protein bS16.